The chain runs to 103 residues: Toluene-4-monooxygenase system, effector component (103 aa).

It belongs to the TmoD/XamoD family. As to quaternary structure, the alkene monooxygenase multicomponent enzyme system is composed of an electron transfer component and a monooxygenase component interacting with the effector protein TmoD. The electron transfer component is composed of a ferredoxin reductase (TmoF) and a ferredoxin (TmoC), and the monooxygenase component is formed by a heterohexamer (dimer of heterotrimers) of two alpha subunits (TmoA), two beta subunits (TmoE) and two gamma subunits (TmoB).

Its pathway is xenobiotic degradation; toluene degradation. In terms of biological role, effector component of the toluene-4-monooxygenase multicomponent enzyme system which catalyzes the O2- and NADH-dependent hydroxylation of toluene to form p-cresol. Required for optimal efficiency and specificity of the holoenzyme. This chain is Toluene-4-monooxygenase system, effector component, found in Ectopseudomonas mendocina (Pseudomonas mendocina).